Consider the following 185-residue polypeptide: Thymidine kinase (185 aa).

Residue 8–15 coordinates ATP; it reads GPMYSGKT. Glu-85 acts as the Proton acceptor in catalysis. Phe-117 provides a ligand contact to substrate. 2 residues coordinate Zn(2+): Cys-142 and Cys-145. Residue 161-165 participates in substrate binding; that stretch reads IIEIG. Zn(2+) contacts are provided by Cys-174 and Cys-177.

This sequence belongs to the thymidine kinase family.

The enzyme catalyses thymidine + ATP = dTMP + ADP + H(+). The sequence is that of Thymidine kinase (TK) from Choristoneura fumiferana entomopoxvirus (CfEPV).